We begin with the raw amino-acid sequence, 546 residues long: DDB1- and CUL4-associated factor 11 (546 aa).

The span at Met1–Gly10 shows a compositional bias: polar residues. The tract at residues Met1 to Val40 is disordered. Ser73 and Ser75 each carry phosphoserine. Residues His79–Asp100 form a disordered region. A compositionally biased stretch (basic and acidic residues) spans Asp80–Asp89. 7 WD repeats span residues Thr170 to Lys210, Asp216 to Asp258, Glu263 to Gln302, Ser305 to Pro345, Gly353 to Gly392, Gly435 to Thr480, and Thr481 to Asp520. The segment at Asp521–Gln546 is disordered. Residues His537–Gln546 are compositionally biased toward polar residues.

In terms of assembly, interacts with DDB1 and CUL4A.

It participates in protein modification; protein ubiquitination. May function as a substrate receptor for CUL4-DDB1 E3 ubiquitin-protein ligase complex. This Bos taurus (Bovine) protein is DDB1- and CUL4-associated factor 11 (DCAF11).